Consider the following 151-residue polypeptide: Probable ubiquitin-conjugating enzyme E2 W-B (151 aa).

The 149-residue stretch at 3–151 folds into the UBC core domain; sequence SMQKRLQKEL…TKWWYHDDTC (149 aa). Catalysis depends on Cys91, which acts as the Glycyl thioester intermediate.

Belongs to the ubiquitin-conjugating enzyme family.

Its subcellular location is the nucleus. It carries out the reaction S-ubiquitinyl-[E1 ubiquitin-activating enzyme]-L-cysteine + [E2 ubiquitin-conjugating enzyme]-L-cysteine = [E1 ubiquitin-activating enzyme]-L-cysteine + S-ubiquitinyl-[E2 ubiquitin-conjugating enzyme]-L-cysteine.. It catalyses the reaction S-ubiquitinyl-[E1 ubiquitin-activating enzyme]-L-cysteine + [acceptor protein]-N-terminal-amino acid = [E1 ubiquitin-activating enzyme]-L-cysteine + N-terminal-ubiquitinyl-[acceptor protein].. It functions in the pathway protein modification; protein ubiquitination. Accepts ubiquitin from the E1 complex and catalyzes its covalent attachment to other proteins. Catalyzes monoubiquitination. Involved in degradation of misfolded chaperone substrate and DNA repair. This chain is Probable ubiquitin-conjugating enzyme E2 W-B (ube2wb), found in Danio rerio (Zebrafish).